The chain runs to 287 residues: Histone H1 (287 aa).

A compositionally biased stretch (low complexity) spans 1–11 (MATEEPVIVNE). Disordered regions lie at residues 1–58 (MATE…THPP) and 120–287 (YKLP…RGRK). The span at 33 to 51 (GKAKKETKAKKPAAPRKRS) shows a compositional bias: basic residues. An H15 domain is found at 55–124 (THPPYFEMIK…KVKNSYKLPS (70 aa)). Basic residues predominate over residues 135–202 (AKKKPAAAKS…KAKPVAKAKP (68 aa)). The span at 203–248 (KAAAAAKPKAAVKPKAAPAKTKAAVKPNLKAKTTTAKVAKTATRTT) shows a compositional bias: low complexity. Over residues 276 to 287 (PAKKATPKRGRK) the composition is skewed to basic residues.

Belongs to the histone H1/H5 family.

The protein localises to the nucleus. The protein resides in the chromosome. In terms of biological role, histones H1 are necessary for the condensation of nucleosome chains into higher-order structures. In Solanum lycopersicum (Tomato), this protein is Histone H1.